The chain runs to 337 residues: GTP 3',8-cyclase (337 aa).

One can recognise a Radical SAM core domain in the interval 17 to 243; that stretch reads PFQRQYYYLR…HKSHTDGPAK (227 aa). GTP is bound at residue Arg26. [4Fe-4S] cluster contacts are provided by Cys33 and Cys37. Tyr39 provides a ligand contact to S-adenosyl-L-methionine. Cys40 provides a ligand contact to [4Fe-4S] cluster. Arg76 serves as a coordination point for GTP. Gly80 contributes to the S-adenosyl-L-methionine binding site. GTP is bound at residue Thr107. Ser131 contributes to the S-adenosyl-L-methionine binding site. Residue Lys168 coordinates GTP. Residue Met202 participates in S-adenosyl-L-methionine binding. Residues Cys265 and Cys268 each coordinate [4Fe-4S] cluster. 270–272 is a GTP binding site; the sequence is RLR. Residue Cys282 coordinates [4Fe-4S] cluster.

The protein belongs to the radical SAM superfamily. MoaA family. In terms of assembly, monomer and homodimer. [4Fe-4S] cluster serves as cofactor.

The enzyme catalyses GTP + AH2 + S-adenosyl-L-methionine = (8S)-3',8-cyclo-7,8-dihydroguanosine 5'-triphosphate + 5'-deoxyadenosine + L-methionine + A + H(+). It functions in the pathway cofactor biosynthesis; molybdopterin biosynthesis. Catalyzes the cyclization of GTP to (8S)-3',8-cyclo-7,8-dihydroguanosine 5'-triphosphate. This is GTP 3',8-cyclase from Haemophilus influenzae (strain 86-028NP).